The primary structure comprises 593 residues: Arginine--tRNA ligase (593 aa).

Positions alanine 138–histidine 148 match the 'HIGH' region motif.

Belongs to the class-I aminoacyl-tRNA synthetase family. As to quaternary structure, monomer.

It is found in the cytoplasm. The catalysed reaction is tRNA(Arg) + L-arginine + ATP = L-arginyl-tRNA(Arg) + AMP + diphosphate. This Burkholderia vietnamiensis (strain G4 / LMG 22486) (Burkholderia cepacia (strain R1808)) protein is Arginine--tRNA ligase.